The primary structure comprises 1161 residues: BMP-2-inducible protein kinase (1161 aa).

The interval 1 to 20 (MKKFSRMPKSEGGSGGGAAG) is disordered. Ser14 is modified (phosphoserine). Positions 51–316 (VTLEESLAEG…DIFQVSYFAF (266 aa)) constitute a Protein kinase domain. ATP-binding positions include 57–65 (LAEGGFSTV) and Lys79. The Proton acceptor role is filled by Asp180. Disordered stretches follow at residues 358 to 439 (TDTI…RVLQ), 453 to 495 (LQHR…HHHL), 610 to 630 (TNQK…FGED), and 655 to 832 (ERAS…TQDL). Over residues 361–394 (IGPTETSIAPRQRPKANSATTATPSVLTIQSSAT) the composition is skewed to polar residues. 2 stretches are compositionally biased toward low complexity: residues 422–439 (LLGQ…RVLQ) and 460–485 (QQQQ…QQQQ). A compositionally biased stretch (polar residues) spans 610 to 619 (TNQKNISNPP). Ser689 bears the Phosphoserine mark. 2 stretches are compositionally biased toward polar residues: residues 697-718 (SSIN…SPAS) and 726-735 (KTSVQGQVQK). Ser742 carries the phosphoserine modification. The segment covering 755–779 (EEEEQDDEEVLQGEQGDFNDDDTEP) has biased composition (acidic residues). Residues 798-813 (EKHSSDSDYEQAKAKY) are compositionally biased toward basic and acidic residues. 2 positions are modified to phosphoserine: Ser817 and Ser818. The residue at position 834 (Thr834) is a Phosphothreonine. Ser928 carries the post-translational modification Phosphoserine. A disordered region spans residues 965–1035 (SQQQKVKQRS…RRDSQSSNEF (71 aa)). The segment covering 970–984 (VKQRSLQKLSSRQRR) has biased composition (basic residues). Residues 1000 to 1011 (TPTSTKKTLKPT) are compositionally biased toward low complexity. Phosphoserine occurs at positions 1029, 1031, 1032, 1039, 1041, 1076, 1107, and 1111. Over residues 1137 to 1146 (TPHQSQQSQP) the composition is skewed to polar residues. The segment at 1137-1161 (TPHQSQQSQPVELDPFGAAPFPSKQ) is disordered.

Belongs to the protein kinase superfamily. Ser/Thr protein kinase family. Autophosphorylated.

It is found in the nucleus. The enzyme catalyses L-seryl-[protein] + ATP = O-phospho-L-seryl-[protein] + ADP + H(+). The catalysed reaction is L-threonyl-[protein] + ATP = O-phospho-L-threonyl-[protein] + ADP + H(+). In terms of biological role, may be involved in osteoblast differentiation. This chain is BMP-2-inducible protein kinase (BMP2K), found in Homo sapiens (Human).